A 485-amino-acid polypeptide reads, in one-letter code: Ribulose bisphosphate carboxylase large chain (485 aa).

The propeptide occupies 1–2 (MS). Proline 3 is modified (N-acetylproline). Lysine 14 is modified (N6,N6,N6-trimethyllysine). Substrate-binding residues include asparagine 123 and threonine 173. The Proton acceptor role is filled by lysine 175. Lysine 177 lines the substrate pocket. Mg(2+) is bound by residues lysine 201, aspartate 203, and glutamate 204. Residue lysine 201 is modified to N6-carboxylysine. Catalysis depends on histidine 294, which acts as the Proton acceptor. Substrate is bound by residues arginine 295, histidine 327, and serine 379.

It belongs to the RuBisCO large chain family. Type I subfamily. Heterohexadecamer of 8 large chains and 8 small chains; disulfide-linked. The disulfide link is formed within the large subunit homodimers. Mg(2+) is required as a cofactor. In terms of processing, the disulfide bond which can form in the large chain dimeric partners within the hexadecamer appears to be associated with oxidative stress and protein turnover.

The protein resides in the plastid. The protein localises to the chloroplast. It catalyses the reaction 2 (2R)-3-phosphoglycerate + 2 H(+) = D-ribulose 1,5-bisphosphate + CO2 + H2O. The enzyme catalyses D-ribulose 1,5-bisphosphate + O2 = 2-phosphoglycolate + (2R)-3-phosphoglycerate + 2 H(+). RuBisCO catalyzes two reactions: the carboxylation of D-ribulose 1,5-bisphosphate, the primary event in carbon dioxide fixation, as well as the oxidative fragmentation of the pentose substrate in the photorespiration process. Both reactions occur simultaneously and in competition at the same active site. The polypeptide is Ribulose bisphosphate carboxylase large chain (Helianthus annuus (Common sunflower)).